The sequence spans 749 residues: MRAVLLFVVSLAALRMARPEIDDTTLVTMDIKQRQLVILKLLNHVVEPLMYKDLEELGKNFKIEENTDLFTKTDVLKDFIKMRKVGFLPRGEIFTLHVDRQLKEVVTMFHMLYYAKDFTTFVKTACWMRLYLNEGMFVYALTVAVRHREDCKGIILPPPYEIYPYYFVRADVIQKAYLLKMKKGLLDLKLCDFYGIKKTDKDVFIIDENVYDKRVHLNKEDKLRYFTEDIDLNTYYFYFHVDYPFWMKDKFMDKMKMRRFELTYIMYQQILARYILERLSNGMGMIKDLSWHKTIKKGYWPWMKLHNGVEIPVRFDNYVIVRDHNRDVIRLCDEYERIIRDAIIKGFIEINGMRLELTKTDDIETLGKLIFGKIDKVDLDKTLVDSYRYLLIVMKAALGLNTFHSDKYFVVPSILDQYQTALRDPVFYMLQKRIIDLVHLFKLRLPSYTKEDLYFPGVKIDNVVVDKLVTYFDDYLMDMTNAVYLTEDEIKKTKSDMVFMVRKRRLNHQPFKVTLDILSDKSVDCVVRVFLGPKKDNLNRLIDINRNRLNFVELDTFLYKLNTGKNTIVRNSYDMHNLVKDRMMTRDFMKKVESITDMRDLMIKDLRNYHTGFPTRLLLPKGFVGGMHMMLYVIVTPLRLVDNVDINILDINRKDLMRDFRSTVLLDKMPLGFPFDRRIDVGNFFTPNMKFVEVTIFHKRMTCDMKTRWNRWVLKDYDMVDRTRIESDSYFVDTDLDMKVNRNVNLIDV.

Positions 1–14 (MRAVLLFVVSLAAL) are cleaved as a signal peptide.

This sequence belongs to the hemocyanin family. In terms of tissue distribution, fat body, and hemolymph of larvae.

The polypeptide is Basic juvenile hormone-suppressible protein 2 (BJSP-2) (Trichoplusia ni (Cabbage looper)).